The sequence spans 1107 residues: uncharacterized protein (1107 aa).

A compositionally biased stretch (low complexity) spans 180–204; it reads SGNGSSGGNNNNNNNSLNNSNNSIG. 2 disordered regions span residues 180–251 and 501–530; these read SGNG…SGNN and LMNINNNNNNNNSNNNNNNNDQNKDKDNQM. Over residues 205-215 the composition is skewed to gly residues; it reads SSGGNGGGGSN. The span at 219–237 shows a compositional bias: polar residues; that stretch reads PSMSPQFTSISKTNSPQII. Composition is skewed to low complexity over residues 238 to 251 and 501 to 521; these read NTSSNNLNSSSGNN and LMNINNNNNNNNSNNNNNNND. Coiled coils occupy residues 789–816 and 940–1012; these read KKDIIEHLTQRHNQYQSNINEDEQIYRE and NIDH…NMLK.

This is an uncharacterized protein from Dictyostelium discoideum (Social amoeba).